Consider the following 424-residue polypeptide: Cyclin-dependent kinase D-1 (424 aa).

In terms of domain architecture, Protein kinase spans 19 to 299 (YLKREVLGEG…AQQALEHRYF (281 aa)). ATP contacts are provided by residues 25–33 (LGEGTYGVV) and Lys-48. Thr-29 carries the post-translational modification Phosphothreonine. The residue at position 30 (Tyr-30) is a Phosphotyrosine. The Proton acceptor role is filled by Asp-141. Ser-168 is modified (phosphoserine). Thr-174 carries the phosphothreonine modification. Disordered regions lie at residues 303–337 (PAPT…PVVL) and 359–424 (ADRT…GYTE). The span at 359 to 374 (ADRTEEHPSGARHMDD) shows a compositional bias: basic and acidic residues.

This sequence belongs to the protein kinase superfamily. CMGC Ser/Thr protein kinase family. CDC2/CDKX subfamily.

Its subcellular location is the nucleus. It carries out the reaction L-seryl-[protein] + ATP = O-phospho-L-seryl-[protein] + ADP + H(+). The catalysed reaction is L-threonyl-[protein] + ATP = O-phospho-L-threonyl-[protein] + ADP + H(+). It catalyses the reaction [DNA-directed RNA polymerase] + ATP = phospho-[DNA-directed RNA polymerase] + ADP + H(+). The chain is Cyclin-dependent kinase D-1 (CDKD-1) from Oryza sativa subsp. indica (Rice).